The sequence spans 159 residues: Cyclic pyranopterin monophosphate synthase (159 aa).

Substrate contacts are provided by residues 76–78 (LCH) and 114–115 (ME). The active site involves D129.

This sequence belongs to the MoaC family. As to quaternary structure, homohexamer; trimer of dimers.

It catalyses the reaction (8S)-3',8-cyclo-7,8-dihydroguanosine 5'-triphosphate = cyclic pyranopterin phosphate + diphosphate. Its pathway is cofactor biosynthesis; molybdopterin biosynthesis. In terms of biological role, catalyzes the conversion of (8S)-3',8-cyclo-7,8-dihydroguanosine 5'-triphosphate to cyclic pyranopterin monophosphate (cPMP). The chain is Cyclic pyranopterin monophosphate synthase from Clostridium botulinum (strain Alaska E43 / Type E3).